We begin with the raw amino-acid sequence, 106 residues long: Small ribosomal subunit protein uS10 (106 aa).

This sequence belongs to the universal ribosomal protein uS10 family. Part of the 30S ribosomal subunit.

Functionally, involved in the binding of tRNA to the ribosomes. This is Small ribosomal subunit protein uS10 from Pyrobaculum neutrophilum (strain DSM 2338 / JCM 9278 / NBRC 100436 / V24Sta) (Thermoproteus neutrophilus).